The sequence spans 298 residues: 4-hydroxy-tetrahydrodipicolinate synthase (298 aa).

Thr51 lines the pyruvate pocket. The active-site Proton donor/acceptor is the Tyr139. The active-site Schiff-base intermediate with substrate is the Lys167. A pyruvate-binding site is contributed by Ile209.

It belongs to the DapA family. In terms of assembly, homotetramer; dimer of dimers.

It is found in the cytoplasm. The catalysed reaction is L-aspartate 4-semialdehyde + pyruvate = (2S,4S)-4-hydroxy-2,3,4,5-tetrahydrodipicolinate + H2O + H(+). It participates in amino-acid biosynthesis; L-lysine biosynthesis via DAP pathway; (S)-tetrahydrodipicolinate from L-aspartate: step 3/4. Catalyzes the condensation of (S)-aspartate-beta-semialdehyde [(S)-ASA] and pyruvate to 4-hydroxy-tetrahydrodipicolinate (HTPA). The protein is 4-hydroxy-tetrahydrodipicolinate synthase of Pasteurella multocida (strain Pm70).